The primary structure comprises 242 residues: MTEITDRYFNDVIARLSGLRDRLAAQMEKAADLIAAAARADRRVYVFGTGHSHMMAEELHYRAGGLAITVPILCGSIMLQDGAVASSHFERIEGAVRPILDRYGIRDGDVLVVVSNSGVNAAPIEAARYAREKGAAIIAPTSVAYSNTIARGRTQLLSLADVVLDNDAPSGDAVLEIAGSALKVGPVSTALGVTILNAVFADVAARLVGEGDAPIYLSANMPGSGDINRSLVERYRDRNPHL.

The region spanning 30 to 214 (AADLIAAAAR…ARLVGEGDAP (185 aa)) is the SIS domain.

It belongs to the UPF0309 family.

The chain is UPF0309 protein BSUIS_B0903 from Brucella suis (strain ATCC 23445 / NCTC 10510).